We begin with the raw amino-acid sequence, 959 residues long: General transcription factor II-I repeat domain-containing protein 1 (959 aa).

Residues Lys27 and Lys94 each participate in a glycyl lysine isopeptide (Lys-Gly) (interchain with G-Cter in SUMO2) cross-link. Positions 96 to 106 are enriched in basic and acidic residues; the sequence is PEAEHPKKVQR. A disordered region spans residues 96-117; sequence PEAEHPKKVQRGEGGGRSLPRS. The GTF2I-like 1 repeat unit spans residues 119–213; that stretch reads LEHGSDVYLL…LEDGGRDSKA (95 aa). Glycyl lysine isopeptide (Lys-Gly) (interchain with G-Cter in SUMO2) cross-links involve residues Lys184, Lys212, Lys225, Lys238, Lys271, Lys294, Lys308, Lys337, Lys436, Lys439, and Lys443. Residues 230-250 form a disordered region; it reads CGLHGQAPKVPPQDLPPTATS. The GTF2I-like 2 repeat unit spans residues 342 to 436; it reads IKETEDINTL…FDERIFTGNK (95 aa). Ser448 bears the Phosphoserine mark. The tract at residues 468 to 492 is disordered; the sequence is NARSDKGSMSEDCGPGTSGELGGLR. The stretch at 556–650 is one GTF2I-like 3 repeat; that stretch reads DSHGDVIRPL…ELLTEGVKEP (95 aa). Residues Lys567, Lys579, Lys588, Lys622, Lys638, and Lys648 each participate in a glycyl lysine isopeptide (Lys-Gly) (interchain with G-Cter in SUMO2) cross-link. A Phosphoserine modification is found at Ser654. Residues 654–679 form a disordered region; the sequence is SQGTASSLGFSPPALPPERDSGDPLV. Glycyl lysine isopeptide (Lys-Gly) (interchain with G-Cter in SUMO2) cross-links involve residues Pro669, Pro670, Asp680, and Lys684. The residue at position 686 (Gln686) is a Phosphoserine. 2 GTF2I-like repeats span residues 696–790 and 793–887; these read LSRI…KPDE and ANRL…ICND. Residues Ile701, Lys724, Lys732, Lys772, Lys774, Lys787, Lys829, Lys889, and Lys893 each participate in a glycyl lysine isopeptide (Lys-Gly) (interchain with G-Cter in SUMO2) cross-link. The interval 892–927 is disordered; that stretch reads AKDSSIPKRKRKRVSEGNSVSSSSSSSSSSSSNPDS. The Nuclear localization signal motif lies at 898–905; that stretch reads PKRKRKRV. Positions 910-923 are enriched in low complexity; sequence SVSSSSSSSSSSSS.

The protein belongs to the TFII-I family. As to quaternary structure, interacts with the retinoblastoma protein (RB1) via its C-terminus. Highly expressed in adult skeletal muscle, heart, fibroblast, bone and fetal tissues. Expressed at lower levels in all other tissues tested.

Its subcellular location is the nucleus. Functionally, may be a transcription regulator involved in cell-cycle progression and skeletal muscle differentiation. May repress GTF2I transcriptional functions, by preventing its nuclear residency, or by inhibiting its transcriptional activation. May contribute to slow-twitch fiber type specificity during myogenesis and in regenerating muscles. Binds troponin I slow-muscle fiber enhancer (USE B1). Binds specifically and with high affinity to the EFG sequences derived from the early enhancer of HOXC8. This is General transcription factor II-I repeat domain-containing protein 1 (GTF2IRD1) from Homo sapiens (Human).